A 121-amino-acid chain; its full sequence is Large ribosomal subunit protein bL20 (121 aa).

Belongs to the bacterial ribosomal protein bL20 family.

Binds directly to 23S ribosomal RNA and is necessary for the in vitro assembly process of the 50S ribosomal subunit. It is not involved in the protein synthesizing functions of that subunit. The protein is Large ribosomal subunit protein bL20 of Chlamydia felis (strain Fe/C-56) (Chlamydophila felis).